Consider the following 675-residue polypeptide: Cytoplasmic tyrosine-protein kinase BMX (675 aa).

Residues 4–111 (KSILEELLLK…WLKALQKEIR (108 aa)) form the PH domain. Residues 113 to 149 (NPHLLVKYHSGFFVDGKFLCCQQSCKAAPGCTLWEAY) form a Btk-type zinc finger. 4 residues coordinate Zn(2+): His-121, Cys-132, Cys-133, and Cys-143. Phosphotyrosine; by autocatalysis is present on residues Tyr-216 and Tyr-224. Positions 296–392 (WFAGNISRSQ…GMITRLRHPV (97 aa)) constitute an SH2 domain. One can recognise a Protein kinase domain in the interval 417–675 (ITLLKELGSG…IEPLREKDKH (259 aa)). ATP-binding positions include 423–431 (LGSGQFGVV) and Lys-445. The active-site Proton acceptor is the Asp-536. Tyr-566 bears the Phosphotyrosine; by SRC and autocatalysis mark. Residues 596-603 (WAFGILMW) carry the CAV1-binding motif.

It belongs to the protein kinase superfamily. Tyr protein kinase family. TEC subfamily. Interacts with BCAR1, CAV1, MYD88, PTK2/FAK1, RUFY1, RUFY2, STAT3, TIRAP and TNFRSF1B. Requires Zn(2+) as cofactor. In terms of processing, phosphorylated in response to protein I/II and to LPS. Phosphorylation at Tyr-566 by SRC and by autocatalysis leads to activation and is required for STAT3 phosphorylation by BMX. As to expression, highly expressed in cells with great migratory potential, including endothelial cells and metastatic carcinoma cell lines.

It is found in the cytoplasm. It catalyses the reaction L-tyrosyl-[protein] + ATP = O-phospho-L-tyrosyl-[protein] + ADP + H(+). With respect to regulation, TEK and vascular endothelial growth factor receptor 1 (FLT1) stimulate BMX tyrosine kinase activity. Activated by integrins through the mediation of PTK2/FAK1. Activated by TNF through the mediation of TNFRSF1B. Its function is as follows. Non-receptor tyrosine kinase that plays central but diverse modulatory roles in various signaling processes involved in the regulation of actin reorganization, cell migration, cell proliferation and survival, cell adhesion, and apoptosis. Participates in signal transduction stimulated by growth factor receptors, cytokine receptors, G-protein coupled receptors, antigen receptors and integrins. Induces tyrosine phosphorylation of BCAR1 in response to integrin regulation. Activation of BMX by integrins is mediated by PTK2/FAK1, a key mediator of integrin signaling events leading to the regulation of actin cytoskeleton and cell motility. Plays a critical role in TNF-induced angiogenesis, and implicated in the signaling of TEK and FLT1 receptors, 2 important receptor families essential for angiogenesis. Required for the phosphorylation and activation of STAT3, a transcription factor involved in cell differentiation. Also involved in interleukin-6 (IL6) induced differentiation. Also plays a role in programming adaptive cytoprotection against extracellular stress in different cell systems, salivary epithelial cells, brain endothelial cells, and dermal fibroblasts. May be involved in regulation of endocytosis through its interaction with an endosomal protein RUFY1. May also play a role in the growth and differentiation of hematopoietic cells; as well as in signal transduction in endocardial and arterial endothelial cells. This is Cytoplasmic tyrosine-protein kinase BMX (BMX) from Homo sapiens (Human).